Consider the following 191-residue polypeptide: Protein phosphatase inhibitor 2 (191 aa).

A compositionally biased stretch (basic and acidic residues) spans 20–31 (ESNKPVRQKITE). 2 disordered regions span residues 20–52 (ESNK…RGRA) and 67–191 (RNVL…PELI). Residues S45 and S47 each carry the phosphoserine modification. A compositionally biased stretch (acidic residues) spans 93–109 (SDEEEEEADPMDQDEEG). Positions 114-136 (KNERFNAHRKAHYDEFRKVKELR) are enriched in basic and acidic residues.

As to quaternary structure, interacts with protein phosphatase 1. Interacts with TOPP1, SRK2D/SNRK2.2, SRK2I/SNRK2.3, SRK2E/SNRK2.6, SRK2C/SNRK2.8 and PYL11. In terms of processing, phosphorylated in vivo. In terms of tissue distribution, expressed in roots, cotyledons, leaves, flowers and siliques.

It localises to the nucleus. It is found in the cytoplasm. Its function is as follows. Inhibitor of protein-phosphatase 1 (PP1). Binds to and inhibits PP1 activity. Acts as negative regulator of abscisic acid (ABA) signaling. Enhances the inhibition of SRK2E/SNRK2.6 by TOPP1. May promote the interaction between TOPP1 and the ABA receptor PYL11. The sequence is that of Protein phosphatase inhibitor 2 from Arabidopsis thaliana (Mouse-ear cress).